Consider the following 558-residue polypeptide: Membrane protein insertase YidC (558 aa).

5 helical membrane-spanning segments follow: residues 3–23 (IKRT…FDNW), 364–384 (FVGN…AVFF), 438–458 (LPVV…LASV), 477–497 (PYFI…KLNP), and 508–528 (MMFM…GLVL).

This sequence belongs to the OXA1/ALB3/YidC family. Type 1 subfamily. Interacts with the Sec translocase complex via SecD. Specifically interacts with transmembrane segments of nascent integral membrane proteins during membrane integration.

It localises to the cell inner membrane. Functionally, required for the insertion and/or proper folding and/or complex formation of integral membrane proteins into the membrane. Involved in integration of membrane proteins that insert both dependently and independently of the Sec translocase complex, as well as at least some lipoproteins. Aids folding of multispanning membrane proteins. This Burkholderia pseudomallei (strain K96243) protein is Membrane protein insertase YidC.